The sequence spans 354 residues: MSGGKQHNAVSIPVNREQRSFEKQRRDLLTGLEHGGGAHRGNSIAPYTEDWPSTVDNWIDSSWKRWDDDMRRLRRGMFALLPLDTFSIGILENPFALMHQMDRQIQDIRERMGSLDVPSTGSVNDFLKDAYEVGEDGKVHFKVRFDAQGFAPQDINVTSSENRVTVHAKKETTTDGRKCSREFCRMVQLPKSIDDSQLKCRMTDDGVLMLEAPVKVDQNQSLTLNESGQVAVRPKSDNQIKAVPASQALVAKGVHGLSYVDDGSGGKRLHVEVAVDPVYKPEDLFVNVDSNRVVVSGRHHKQKSDQHGRSSSFAEFSQSYAIPETVDPLSVSAQVVGNTLVLEAPLEKQHAITH.

The tract at residues Met-1–Phe-21 is disordered. 2 sHSP domains span residues Ser-122–Arg-233 and Ala-251–His-354.

This sequence belongs to the small heat shock protein (HSP20) family.

This Schistosoma mansoni (Blood fluke) protein is Major egg antigen.